Reading from the N-terminus, the 485-residue chain is MNESVTVRGKDRYKSGVMEYKKMGYWEPDYEPKDTDVIALFRVTPQDGVDPIEASAAVAGESSTATWTVVWTDRLTAAEKYRAKCYRVDPVPNSPGQYFAYIAYDLDLFENGSIANLSASIIGNVFGFKPLKALRLEDMRLPVAYVKTFQGPATGIVVERERMDKFGRPLLGATVKPKLGLSGRNYGRVVYEALKGGLDFTKDDENINSQPFMHWRERFLYCMEAVNKAQAASGEIKGTYLNVTAGTMEEMYERAEFAKQLGSVIIMIDLVIGYTAIQSMAKWARKNDMILHLHRAGHSTYTRQRNHGVSFRVIAKWMRLAGVDHIHAGTVVGKLEGDPATTKGYYDICREDYNPANLEHGLFFDQHWASLNKLMPVASGGIHAGQMHQLLDLLGEDVVLQFGGGTIGHPMGIAAGATANRVALEAMILARNEGRDYVHEGPEILAKAAQTCTPLKAALDTWKNVSFNYESTDTPDYAPTPSVSV.

Substrate is bound by residues Asn-124 and Thr-174. Lys-176 functions as the Proton acceptor in the catalytic mechanism. Lys-178 serves as a coordination point for substrate. Residues Lys-202, Asp-204, and Glu-205 each coordinate Mg(2+). The residue at position 202 (Lys-202) is an N6-carboxylysine. His-294 serves as the catalytic Proton acceptor. Arg-295, His-327, and Ser-379 together coordinate substrate.

It belongs to the RuBisCO large chain family. Type I subfamily. As to quaternary structure, heterohexadecamer of 8 large chains and 8 small chains. Mg(2+) serves as cofactor.

The catalysed reaction is 2 (2R)-3-phosphoglycerate + 2 H(+) = D-ribulose 1,5-bisphosphate + CO2 + H2O. It catalyses the reaction D-ribulose 1,5-bisphosphate + O2 = 2-phosphoglycolate + (2R)-3-phosphoglycerate + 2 H(+). Functionally, ruBisCO catalyzes two reactions: the carboxylation of D-ribulose 1,5-bisphosphate, the primary event in carbon dioxide fixation, as well as the oxidative fragmentation of the pentose substrate. Both reactions occur simultaneously and in competition at the same active site. The polypeptide is Ribulose bisphosphate carboxylase large chain (Rhodopseudomonas palustris (strain HaA2)).